We begin with the raw amino-acid sequence, 122 residues long: N(2)-fixation sustaining protein CowN (122 aa).

Belongs to the CowN family.

Its function is as follows. Is required to sustain N(2)-dependent growth in the presence of low levels of carbon monoxide (CO). Probably acts by protecting the N(2) fixation ability of the nitrogenase complex, which is inactivated in the presence of CO. This Azorhizobium caulinodans (strain ATCC 43989 / DSM 5975 / JCM 20966 / LMG 6465 / NBRC 14845 / NCIMB 13405 / ORS 571) protein is N(2)-fixation sustaining protein CowN.